We begin with the raw amino-acid sequence, 461 residues long: Putative cytochrome P450 132 (461 aa).

Residue cysteine 409 participates in heme binding.

This sequence belongs to the cytochrome P450 family. Heme is required as a cofactor.

The polypeptide is Putative cytochrome P450 132 (cyp132) (Mycobacterium tuberculosis (strain ATCC 25618 / H37Rv)).